Here is a 290-residue protein sequence, read N- to C-terminus: Nitrogenase iron protein 1 (290 aa).

10-17 (GKGGIGKS) is a binding site for ATP. [4Fe-4S] cluster is bound at residue cysteine 98. At arginine 101 the chain carries ADP-ribosylarginine; by dinitrogenase reductase ADP-ribosyltransferase. Position 133 (cysteine 133) interacts with [4Fe-4S] cluster.

The protein belongs to the NifH/BchL/ChlL family. Homodimer. It depends on [4Fe-4S] cluster as a cofactor. Post-translationally, the reversible ADP-ribosylation of Arg-101 inactivates the nitrogenase reductase and regulates nitrogenase activity.

The enzyme catalyses N2 + 8 reduced [2Fe-2S]-[ferredoxin] + 16 ATP + 16 H2O = H2 + 8 oxidized [2Fe-2S]-[ferredoxin] + 2 NH4(+) + 16 ADP + 16 phosphate + 6 H(+). Its activity is regulated as follows. Nitrogenase holoenzyme is subject to 'conformational protection' by FeSII; under oxidizing conditions FeSII binds to the holoenzyme and reversibly protects it from oxidation. The key enzymatic reactions in nitrogen fixation are catalyzed by the nitrogenase complex, which has 2 components: the iron protein (component 2) and a component 1 which is either a molybdenum-iron protein, a vanadium-iron, or an iron-iron protein. This Azotobacter vinelandii protein is Nitrogenase iron protein 1 (nifH1).